The chain runs to 269 residues: MLKEQLIAEAQKIDASVALDSIFESVNISPEAKETFGTVFEATVKQHAVKLAESHIAKIAEKAEEEVEKNKEEAEEKAEKKIAEQASKFLDHLAKEWLTENKLAVDKGIKAELFESMLGGLKELFVEHNVVVPEESVDVVAEMEEELQEHKEESARLFEELNKRDAYINYVQREVALSESTKDLTESQKEKVSALVEGIDYSDAFSSKLSAIVEMVKKSNKDESTITESINTPDTEEAGLNFVTEAVEDKSAQGAEDIVSVYAKVASRF.

The protein belongs to the T4likevirus capsid assembly scaffolding protein family.

The protein resides in the virion. Functionally, scaffolding protein involved in the icosahedric procapsid assembly. Coassembles with the capsid proteins to form the procapsid, in which the scaffolding protein is found within the external shell of icosahedrally arranged capsid protein subunits. In a subsequent step the scaffolding protein molecules are cleaved by the viral protease and released, except for the internal peptide VII. Cleavage product of Gp22 that is incorporated into the mature phage head. In Escherichia phage AR1 (Bacteriophage AR1), this protein is Capsid assembly scaffolding protein (22).